The sequence spans 509 residues: Scavenger receptor class B member 1 (509 aa).

Over 1–11 the chain is Cytoplasmic; that stretch reads MGVSSRARWVA. Residues 12–32 form a helical membrane-spanning segment; sequence LGLGVLGLLCAALGVIMILMV. Residues 33–440 lie on the Extracellular side of the membrane; it reads PSLIKQQVLK…YTQLVLMPQV (408 aa). N-linked (GlcNAc...) asparagine glycans are attached at residues Asn102, Asn108, Asn116, Asn173, Asn212, Asn227, Asn255, Asn310, Asn330, and Asn383. Cys251 and Cys384 are joined by a disulfide. The chain crosses the membrane as a helical span at residues 441 to 461; sequence LHYAQYVLLGLGGLLLLVPII. Topologically, residues 462–509 are cytoplasmic; it reads YQLRSQEKCFLFWSGSKKGSQDKEAMQAYSESLMSPAAKGTVLQEAKL.

Belongs to the CD36 family. As to quaternary structure, the C-terminal region binds to PDZK1. N-glycosylated. Post-translationally, the six cysteines of the extracellular domain are all involved in intramolecular disulfide bonds.

Its subcellular location is the cell membrane. It localises to the membrane. It is found in the caveola. Its function is as follows. Receptor for different ligands such as phospholipids, cholesterol ester, lipoproteins, phosphatidylserine and apoptotic cells. Receptor for HDL, mediating selective uptake of cholesteryl ether and HDL-dependent cholesterol efflux. Also facilitates the flux of free and esterified cholesterol between the cell surface and apoB-containing lipoproteins and modified lipoproteins, although less efficiently than HDL. May be involved in the phagocytosis of apoptotic cells, via its phosphatidylserine binding activity. This chain is Scavenger receptor class B member 1 (Scarb1), found in Rattus norvegicus (Rat).